A 173-amino-acid chain; its full sequence is Crossover junction endodeoxyribonuclease RuvC (173 aa).

Active-site residues include Asp-8, Glu-67, and Asp-139. Residues Asp-8, Glu-67, and Asp-139 each coordinate Mg(2+).

Belongs to the RuvC family. As to quaternary structure, homodimer which binds Holliday junction (HJ) DNA. The HJ becomes 2-fold symmetrical on binding to RuvC with unstacked arms; it has a different conformation from HJ DNA in complex with RuvA. In the full resolvosome a probable DNA-RuvA(4)-RuvB(12)-RuvC(2) complex forms which resolves the HJ. Mg(2+) serves as cofactor.

The protein resides in the cytoplasm. It catalyses the reaction Endonucleolytic cleavage at a junction such as a reciprocal single-stranded crossover between two homologous DNA duplexes (Holliday junction).. Functionally, the RuvA-RuvB-RuvC complex processes Holliday junction (HJ) DNA during genetic recombination and DNA repair. Endonuclease that resolves HJ intermediates. Cleaves cruciform DNA by making single-stranded nicks across the HJ at symmetrical positions within the homologous arms, yielding a 5'-phosphate and a 3'-hydroxyl group; requires a central core of homology in the junction. The consensus cleavage sequence is 5'-(A/T)TT(C/G)-3'. Cleavage occurs on the 3'-side of the TT dinucleotide at the point of strand exchange. HJ branch migration catalyzed by RuvA-RuvB allows RuvC to scan DNA until it finds its consensus sequence, where it cleaves and resolves the cruciform DNA. The chain is Crossover junction endodeoxyribonuclease RuvC from Salmonella choleraesuis (strain SC-B67).